Here is a 93-residue protein sequence, read N- to C-terminus: Pyrimidine/purine nucleoside phosphorylase (93 aa).

The protein belongs to the nucleoside phosphorylase PpnP family.

It catalyses the reaction a purine D-ribonucleoside + phosphate = a purine nucleobase + alpha-D-ribose 1-phosphate. The catalysed reaction is adenosine + phosphate = alpha-D-ribose 1-phosphate + adenine. It carries out the reaction cytidine + phosphate = cytosine + alpha-D-ribose 1-phosphate. The enzyme catalyses guanosine + phosphate = alpha-D-ribose 1-phosphate + guanine. It catalyses the reaction inosine + phosphate = alpha-D-ribose 1-phosphate + hypoxanthine. The catalysed reaction is thymidine + phosphate = 2-deoxy-alpha-D-ribose 1-phosphate + thymine. It carries out the reaction uridine + phosphate = alpha-D-ribose 1-phosphate + uracil. The enzyme catalyses xanthosine + phosphate = alpha-D-ribose 1-phosphate + xanthine. Catalyzes the phosphorolysis of diverse nucleosides, yielding D-ribose 1-phosphate and the respective free bases. Can use uridine, adenosine, guanosine, cytidine, thymidine, inosine and xanthosine as substrates. Also catalyzes the reverse reactions. The protein is Pyrimidine/purine nucleoside phosphorylase of Shewanella halifaxensis (strain HAW-EB4).